The sequence spans 361 residues: Mannose-1-phosphate guanylyltransferase 1 (361 aa).

GDP-alpha-D-mannose-binding residues include L6 and V7. G9, G11, T12, R13, and K23 together coordinate diphosphate. Positions 85, 109, 111, 146, and 173 each coordinate GDP-alpha-D-mannose.

It belongs to the transferase hexapeptide repeat family. As to quaternary structure, interacts in vitro with CSN5A and CSN5B, but in planta only with CSN5B, which targets CYT1 for degradation in the dark by the 26S proteasome. Forms homodimers in the unliganded structure. The product-bound structure is composed of six dimers that form a dodecameric assembly.

It localises to the cytoplasm. The protein resides in the nucleus. It carries out the reaction alpha-D-mannose 1-phosphate + GTP + H(+) = GDP-alpha-D-mannose + diphosphate. It participates in nucleotide-sugar biosynthesis; GDP-alpha-D-mannose biosynthesis; GDP-alpha-D-mannose from alpha-D-mannose 1-phosphate (GTP route): step 1/1. Functionally, essential protein during embryogenesis. Catalyzes a reaction of the Smirnoff-Wheeler pathway, the major route to ascorbate biosynthesis in plants. Plays an essential role in plant growth and development and cell-wall architecture. Provides GDP-mannose, used for cell wall carbohydrate biosynthesis, protein N-glycosylation, as well as for the biosynthesis of the antioxidant ascorbate. The sequence is that of Mannose-1-phosphate guanylyltransferase 1 from Arabidopsis thaliana (Mouse-ear cress).